Reading from the N-terminus, the 234-residue chain is Sugar fermentation stimulation protein homolog (234 aa).

It belongs to the SfsA family.

The protein is Sugar fermentation stimulation protein homolog of Pseudoalteromonas atlantica (strain T6c / ATCC BAA-1087).